The chain runs to 323 residues: Macrolide efflux protein A (323 aa).

Helical transmembrane passes span 6-26 (VLSM…AIGV), 51-71 (LTIV…VLFI), 105-125 (SLQS…YSVW), 128-148 (NAII…VLIV), 182-202 (FALL…NALF), 219-239 (ITEI…GLFG), 245-265 (ILLI…SGLL), 270-290 (FFIF…YSGV), and 303-323 (YLGR…PIGL).

The protein belongs to the major facilitator superfamily. Drug:H(+) antiporter-3 (DHA3) (TC 2.A.1.21) family.

The protein resides in the cell membrane. Confers resistance to 14-membered macrolides including erythromycin and to 15-membered macrolides but not to 16-membered macrolides, lincosamides or analogs of streptogramin B. May function as an efflux pump to regulate intracellular macrolide levels. The sequence is that of Macrolide efflux protein A (mefA) from Enterococcus faecalis (Streptococcus faecalis).